Reading from the N-terminus, the 355-residue chain is Double-stranded RNA-binding protein 4 (355 aa).

DRBM domains are found at residues Val-4 to Pro-73 and Ala-82 to Asn-150. The span at Lys-149–Val-188 shows a compositional bias: polar residues. Residues Lys-149–Asp-193 are disordered.

Heterodimer with DRB1 or DRB5. Interacts with DCL4 and cauliflower mosaic virus (CaMV) transactivator/viroplasmin protein. Interaction with CaMV transactivator/viroplasmin protein inhibits RNA silencing ability of DRB4. As to expression, expressed in roots, leaf vasculature, shoot apical meristem (SAM) and developing anthers.

It is found in the nucleus. Functionally, double-stranded RNA-binding protein involved in RNA-mediated post-transcriptional gene silencing (PTGS). Functions in the trans-acting small interfering RNAs (ta-siRNAs) biogenesis by binding and assisting DICER-LIKE 4 (DCL4). Required for DCL4 activity. Required for the 21 nucleotide ta-siRNAs production of the TAS3 transcript in leaves but not in flowers. Plays an important role in silencing RNA of both DNA and RNA viruses. Involved with argonaute 7 (AGO7) and RDR6 in turnip crinkle virus (TCV) silencing. May not be directly involved in viral siRNA production. May stabilize the 21 nucleotide viral siRNAs and deliver them to the RISC complex. Targeted by the viral silencing suppressor (VSR) transactivator/viroplasmin (TAV) protein of the cauliflower mosaic virus (CaMV) that inactivates DRB4 function in RNA silencing. Probably not involved in the guide strand selection from RNA duplexes. Involved in leaf morphology through its function in ta-siRNA-mediated silencing. In Arabidopsis thaliana (Mouse-ear cress), this protein is Double-stranded RNA-binding protein 4 (DBR4).